Here is a 331-residue protein sequence, read N- to C-terminus: L-lactate dehydrogenase A chain (331 aa).

Residues 29–57 (GMVG…MEDK) and Arg98 each bind NAD(+). Residues Arg105, Asn137, and Arg168 each contribute to the substrate site. Asn137 serves as a coordination point for NAD(+). The Proton acceptor role is filled by His192. Thr247 lines the substrate pocket.

The protein belongs to the LDH/MDH superfamily. LDH family. As to quaternary structure, homotetramer.

The protein resides in the cytoplasm. The enzyme catalyses (S)-lactate + NAD(+) = pyruvate + NADH + H(+). The protein operates within fermentation; pyruvate fermentation to lactate; (S)-lactate from pyruvate: step 1/1. Interconverts simultaneously and stereospecifically pyruvate and lactate with concomitant interconversion of NADH and NAD(+). This chain is L-lactate dehydrogenase A chain (ldha), found in Patagonotothen tessellata (Black southern cod).